The chain runs to 222 residues: Thiol:disulfide interchange protein DsbL (222 aa).

Positions 1–27 (MSAKWINSIFKSVVLTAALALPFTASA) are cleaved as a signal peptide. In terms of domain architecture, Thioredoxin spans 28–221 (FTEGTDYMVL…MAQLVRELAT (194 aa)). A disulfide bridge connects residues Cys56 and Cys59.

It belongs to the thioredoxin family. DsbL subfamily. Interacts with DsbI.

The protein resides in the periplasm. Its function is as follows. Involved in disulfide-bond formation. Acts by transferring its disulfide bond to other proteins. Part of a redox system composed of DsbI and DsbL that mediates formation of an essential disulfide bond in AssT. The protein is Thiol:disulfide interchange protein DsbL of Lelliottia amnigena (Enterobacter amnigenus).